The primary structure comprises 334 residues: Cobalt-precorrin-5B C(1)-methyltransferase (334 aa).

Belongs to the CbiD family.

The catalysed reaction is Co-precorrin-5B + S-adenosyl-L-methionine = Co-precorrin-6A + S-adenosyl-L-homocysteine. It participates in cofactor biosynthesis; adenosylcobalamin biosynthesis; cob(II)yrinate a,c-diamide from sirohydrochlorin (anaerobic route): step 6/10. In terms of biological role, catalyzes the methylation of C-1 in cobalt-precorrin-5B to form cobalt-precorrin-6A. The polypeptide is Cobalt-precorrin-5B C(1)-methyltransferase (Methanoregula boonei (strain DSM 21154 / JCM 14090 / 6A8)).